Here is a 363-residue protein sequence, read N- to C-terminus: Spermidine/putrescine import ATP-binding protein PotA (363 aa).

In terms of domain architecture, ABC transporter spans 4–234 (LEIRNVTRRF…PRNHFVADFI (231 aa)). Position 36–43 (36–43 (GPSGCGKT)) interacts with ATP.

The protein belongs to the ABC transporter superfamily. Spermidine/putrescine importer (TC 3.A.1.11.1) family. In terms of assembly, the complex is composed of two ATP-binding proteins (PotA), two transmembrane proteins (PotB and PotC) and a solute-binding protein (PotD).

It localises to the cell inner membrane. It catalyses the reaction ATP + H2O + polyamine-[polyamine-binding protein]Side 1 = ADP + phosphate + polyamineSide 2 + [polyamine-binding protein]Side 1.. Functionally, part of the ABC transporter complex PotABCD involved in spermidine/putrescine import. Responsible for energy coupling to the transport system. The protein is Spermidine/putrescine import ATP-binding protein PotA of Nitrosospira multiformis (strain ATCC 25196 / NCIMB 11849 / C 71).